Reading from the N-terminus, the 347-residue chain is N-acetyl-gamma-glutamyl-phosphate reductase (347 aa).

Cysteine 152 is an active-site residue.

Belongs to the NAGSA dehydrogenase family. Type 1 subfamily.

Its subcellular location is the cytoplasm. It carries out the reaction N-acetyl-L-glutamate 5-semialdehyde + phosphate + NADP(+) = N-acetyl-L-glutamyl 5-phosphate + NADPH + H(+). It functions in the pathway amino-acid biosynthesis; L-arginine biosynthesis; N(2)-acetyl-L-ornithine from L-glutamate: step 3/4. Its function is as follows. Catalyzes the NADPH-dependent reduction of N-acetyl-5-glutamyl phosphate to yield N-acetyl-L-glutamate 5-semialdehyde. This Neisseria gonorrhoeae (strain NCCP11945) protein is N-acetyl-gamma-glutamyl-phosphate reductase.